A 337-amino-acid chain; its full sequence is Transaldolase (337 aa).

The Nuclear localization signal motif lies at 1-10 (MSGSPVKRQR). The residue at position 115 (Lys-115) is an N6-acetyllysine. Lys-142 serves as the catalytic Schiff-base intermediate with substrate. N6-acetyllysine is present on Lys-219. Phosphoserine is present on residues Ser-237 and Ser-256. 3 positions are modified to N6-acetyllysine: Lys-269, Lys-286, and Lys-321.

The protein belongs to the transaldolase family. Type 1 subfamily. In terms of assembly, homodimer. Interacts with KPNA1 and KPNA4.

The protein localises to the nucleus. Its subcellular location is the cytoplasm. The enzyme catalyses D-sedoheptulose 7-phosphate + D-glyceraldehyde 3-phosphate = D-erythrose 4-phosphate + beta-D-fructose 6-phosphate. It functions in the pathway carbohydrate degradation; pentose phosphate pathway; D-glyceraldehyde 3-phosphate and beta-D-fructose 6-phosphate from D-ribose 5-phosphate and D-xylulose 5-phosphate (non-oxidative stage): step 2/3. Functionally, catalyzes the rate-limiting step of the non-oxidative phase in the pentose phosphate pathway. Catalyzes the reversible conversion of sedheptulose-7-phosphate and D-glyceraldehyde 3-phosphate into erythrose-4-phosphate and beta-D-fructose 6-phosphate. In Cricetulus griseus (Chinese hamster), this protein is Transaldolase (TALDO1).